The chain runs to 380 residues: Chaperone protein DnaJ (380 aa).

In terms of domain architecture, J spans 5-70 (DYYEVLGLQK…EKRAAYDQYG (66 aa)). The segment at 136-214 (GCKKDIRIST…CHGDGRVQKA (79 aa)) adopts a CR-type zinc-finger fold. C149, C152, C166, C169, C188, C191, C202, and C205 together coordinate Zn(2+). CXXCXGXG motif repeat units follow at residues 149 to 156 (CDTCHGSG), 166 to 173 (CSHCHGSG), 188 to 195 (CPSCHGSG), and 202 to 209 (CKSCHGDG).

It belongs to the DnaJ family. Homodimer. It depends on Zn(2+) as a cofactor.

The protein resides in the cytoplasm. Participates actively in the response to hyperosmotic and heat shock by preventing the aggregation of stress-denatured proteins and by disaggregating proteins, also in an autonomous, DnaK-independent fashion. Unfolded proteins bind initially to DnaJ; upon interaction with the DnaJ-bound protein, DnaK hydrolyzes its bound ATP, resulting in the formation of a stable complex. GrpE releases ADP from DnaK; ATP binding to DnaK triggers the release of the substrate protein, thus completing the reaction cycle. Several rounds of ATP-dependent interactions between DnaJ, DnaK and GrpE are required for fully efficient folding. Also involved, together with DnaK and GrpE, in the DNA replication of plasmids through activation of initiation proteins. In Actinobacillus pleuropneumoniae serotype 5b (strain L20), this protein is Chaperone protein DnaJ.